The sequence spans 405 residues: Acetate kinase (405 aa).

Residue Asn-7 participates in Mg(2+) binding. ATP is bound at residue Lys-14. Arg-98 contributes to the substrate binding site. Asp-156 (proton donor/acceptor) is an active-site residue. ATP is bound by residues 215-219, 290-292, and 338-342; these read HLGNG, DLR, and GVGEN. Glu-391 serves as a coordination point for Mg(2+).

This sequence belongs to the acetokinase family. As to quaternary structure, homodimer. Mg(2+) serves as cofactor. Mn(2+) is required as a cofactor.

It is found in the cytoplasm. The enzyme catalyses acetate + ATP = acetyl phosphate + ADP. Its pathway is metabolic intermediate biosynthesis; acetyl-CoA biosynthesis; acetyl-CoA from acetate: step 1/2. Catalyzes the formation of acetyl phosphate from acetate and ATP. Can also catalyze the reverse reaction. The polypeptide is Acetate kinase (Gloeobacter violaceus (strain ATCC 29082 / PCC 7421)).